The chain runs to 335 residues: MKLKLKNVFLAYFLVSIAGLLYALVQLGQPCDCLPPLRAAAEQLRQKDLRISQLQADLRRPPPVPAQPPEPEALPTIYVITPTYARLVQKAELVRLSQTLSLVPRLHWLLVEDAESPTPLVSGLLAASGLLFTHLAVLTPKAQRLREGEPGWVRPRGVEQRNKALDWLRGKGGAVGGEKDPPPPGTQGVVYFADDDNTYSRELFKEMRWTRGVSVWPVGLVGGLRFEGPRVQDGRVVGFHTAWEPNRPFPLDMAGFAVALPLLLAKPNAQFDATAPRGHLESSLLSHLVDPKDLEPRAANCTQVLVWHTRTEKPKMKQEEQLQRQGQGSDPAIEV.

Over 1 to 7 (MKLKLKN) the chain is Cytoplasmic. A helical; Signal-anchor for type II membrane protein membrane pass occupies residues 8–28 (VFLAYFLVSIAGLLYALVQLG). The Lumenal segment spans residues 29–335 (QPCDCLPPLR…GQGSDPAIEV (307 aa)). Residue D196 coordinates Mn(2+). E281 acts as the Proton acceptor in catalysis. N-linked (GlcNAc...) asparagine glycosylation is present at N300. The segment covering 312–322 (EKPKMKQEEQL) has biased composition (basic and acidic residues). The tract at residues 312–335 (EKPKMKQEEQLQRQGQGSDPAIEV) is disordered.

This sequence belongs to the glycosyltransferase 43 family. Homodimer; disulfide-linked. Interacts with PXYLP1; the interaction increases the 2-phosphoxylose phosphatase activity of PXYLP1 during completion of linkage region formation in a B3GAT3-mediated manner. Mn(2+) is required as a cofactor. In terms of processing, N-glycosylated. In terms of tissue distribution, liver, brain and heart. Moderate expression seen in lung, skeletal muscle, kidney and testis.

Its subcellular location is the golgi apparatus membrane. The protein resides in the golgi apparatus. The protein localises to the cis-Golgi network. It carries out the reaction 3-O-(beta-D-galactosyl-(1-&gt;3)-beta-D-galactosyl-(1-&gt;4)-beta-D-xylosyl)-L-seryl-[protein] + UDP-alpha-D-glucuronate = 3-O-(beta-D-GlcA-(1-&gt;3)-beta-D-Gal-(1-&gt;3)-beta-D-Gal-(1-&gt;4)-beta-D-Xyl)-L-seryl-[protein] + UDP + H(+). The protein operates within protein modification; protein glycosylation. Its function is as follows. Glycosaminoglycans biosynthesis. Involved in forming the linkage tetrasaccharide present in heparan sulfate and chondroitin sulfate. Transfers a glucuronic acid moiety from the uridine diphosphate-glucuronic acid (UDP-GlcUA) to the common linkage region trisaccharide Gal-beta-1,3-Gal-beta-1,4-Xyl covalently bound to a Ser residue at the glycosaminylglycan attachment site of proteoglycans. Can also play a role in the biosynthesis of l2/HNK-1 carbohydrate epitope on glycoproteins. Highest activity seen with Gal-beta-1,3-Gal-beta-O-R (where R=naphthalenemethanol or benzyl alcohol). Stimulates 2-phosphoxylose phosphatase activity of PXYLP1 in presence of uridine diphosphate-glucuronic acid (UDP-GlcUA) during completion of linkage region formation. The protein is Galactosylgalactosylxylosylprotein 3-beta-glucuronosyltransferase 3 (B3GAT3) of Cricetulus griseus (Chinese hamster).